Consider the following 280-residue polypeptide: Four and a half LIM domains protein 3 (280 aa).

At serine 2 the chain carries N-acetylserine. The C4-type zinc finger occupies 7 to 31; that stretch reads CAKCNESLYGRKYIQTDSGPYCVPC. 2 LIM zinc-binding domains span residues 40–92 and 101–153; these read CAEC…CNDC and CSAC…CVPC. Lysine 157 is modified (N6-acetyllysine). LIM zinc-binding domains are found at residues 162–212 and 221–275; these read CARC…CVAC and CSSC…CQGC. The residue at position 235 (lysine 235) is an N6-acetyllysine.

Interacts with SOX15; the interaction recruits FHL3 to FOXK1 promoters where it acts as a transcriptional coactivator of FOXK1. As to expression, expressed only in skeletal muscle.

The protein resides in the nucleus. The protein localises to the cytoplasm. Functionally, recruited by SOX15 to FOXK1 promoters where it acts as a transcriptional coactivator of FOXK1. The protein is Four and a half LIM domains protein 3 (FHL3) of Homo sapiens (Human).